We begin with the raw amino-acid sequence, 373 residues long: Outer membrane protein assembly factor BamC (373 aa).

Positions 1-16 (MLKQVTPLVLIAAVTA) are cleaved as a signal peptide. Cys17 is lipidated: N-palmitoyl cysteine. The S-diacylglycerol cysteine moiety is linked to residue Cys17.

This sequence belongs to the BamC family. As to quaternary structure, part of the Bam complex.

It is found in the cell outer membrane. Its function is as follows. Part of the outer membrane protein assembly complex, which is involved in assembly and insertion of beta-barrel proteins into the outer membrane. The polypeptide is Outer membrane protein assembly factor BamC (Shewanella sediminis (strain HAW-EB3)).